Here is a 376-residue protein sequence, read N- to C-terminus: Oligopeptide transport system permease protein OppC (376 aa).

The next 7 membrane-spanning stretches (helical) occupy residues 46 to 66, 149 to 169, 173 to 193, 209 to 229, 242 to 262, 297 to 317, and 341 to 361; these read WAIL…IVPL, FPLL…WASV, LWIA…YGAV, IIEI…GATF, VIFT…RIYI, LAVV…SLVF, and VALI…ARTF. Residues 169-366 form the ABC transmembrane type-1 domain; it reads VAKSLWIAVV…AARTFANALN (198 aa).

The protein belongs to the binding-protein-dependent transport system permease family. OppBC subfamily. In terms of assembly, the complex is composed of two ATP-binding proteins (OppD and OppF), two transmembrane proteins (OppB and OppC) and a solute-binding protein (OppA).

The protein localises to the cell membrane. In terms of biological role, part of the ABC transporter complex OppABCDF involved in the uptake of oligopeptides. Probably responsible for the translocation of the substrate across the membrane. This Mycoplasma genitalium (strain ATCC 33530 / DSM 19775 / NCTC 10195 / G37) (Mycoplasmoides genitalium) protein is Oligopeptide transport system permease protein OppC (oppC).